The following is a 182-amino-acid chain: Glycoprotein Q2 (182 aa).

Positions 1–20 are cleaved as a signal peptide; sequence MHFVAVYILTHFHAYPGVAA. 2 N-linked (GlcNAc...) asparagine; by host glycosylation sites follow: Asn-74 and Asn-110.

As to quaternary structure, interacts with isoform gQ2. The heterodimer gQ1-gQ2 associates with the glycoprotein complex gH-gL to form a tetrameric complex. The gH/gL/gQ1/gQ2 complex binds to host TNFRSF4. Post-translationally, glycosylated by host.

It is found in the virion membrane. The protein resides in the host endoplasmic reticulum-Golgi intermediate compartment. In terms of biological role, plays a role in virus entry by participating in host receptor binding at the cell surface. In Human herpesvirus 6B (strain Z29) (HHV-6 variant B), this protein is Glycoprotein Q2.